The primary structure comprises 161 residues: Phosphopantetheine adenylyltransferase (161 aa).

Residue S11 participates in substrate binding. ATP is bound by residues 11-12 and H19; that span reads SF. Residues K43, L75, and R89 each coordinate substrate. Residues 90–92, E100, and 125–131 each bind ATP; these read GLR and YSYLSSS.

It belongs to the bacterial CoaD family. As to quaternary structure, homohexamer. Mg(2+) is required as a cofactor.

It is found in the cytoplasm. It catalyses the reaction (R)-4'-phosphopantetheine + ATP + H(+) = 3'-dephospho-CoA + diphosphate. Its pathway is cofactor biosynthesis; coenzyme A biosynthesis; CoA from (R)-pantothenate: step 4/5. Its function is as follows. Reversibly transfers an adenylyl group from ATP to 4'-phosphopantetheine, yielding dephospho-CoA (dPCoA) and pyrophosphate. This Citrifermentans bemidjiense (strain ATCC BAA-1014 / DSM 16622 / JCM 12645 / Bem) (Geobacter bemidjiensis) protein is Phosphopantetheine adenylyltransferase.